Consider the following 809-residue polypeptide: MEDEQPDSLEGWVPVREGLFAEPERHRLRFLVAWNGAEGKFAVTCHDRTAQQRRLREGARLGPEPEPKPEAAVSPSSWAGLLSAAGLRGAHRQLAALWPPLERCFPRLPPELDVGGGGAWGLGLGLWALLWPTRAGPGEAALQELCGQLERYLGAAADGCGGATVRDALFPAEGGAADCESPREFRERALRARWVEADARLRQVIQGHGKANTMVALMNVYQEEDEAYQELVTVATMFFQYLLQPFRAMREVATLCKLDILKSLDEDDLGPRRVVALEKEAEEWTRRAEEAVVSIQDITVNYFKETVKALAGMQKEMEQDAKRFGQAAWATAIPRLEKLQLMLARETLQLMRAKELCLNHKRAEIQGKMEDLPEQEKNTNVVDELEIQFYEIQLELYEVKFEILKNEEILLTTQLDSLKRLIKEKQDEVVYYDPCENPEELKVIDCVVGLQDDKNLEVKELRRQCQQLESKRGRICAKRASLRSRKDQCKENHRFRLQQAEESIRYSRQHHSIQMKRDKIKEEEQKKKEWINQERQKTLQRLRSFKDKRLAQSVRNTSGSEPVAPNLPSDLSQQMCLPASHAVSVIHPSSRKTRGVPLSEAGNVKSPKCQNCHGNIPVQVFVPVGDQTHSKSSEELSLPPPPPPPPPPPPPPPPPPPPLRALSSSSQAATHQNLGFRAPVKDDQPRPLVCESPAERPRDSLESFSCPGSMDEVLASLRHGRAPLRKVEVPAVRPPHASINEHILAAIRQGVKLKKVHPDLGPNPSSKPTSNRRTSDLERSIKAALQRIKRVSADSEEDSDEQDPGQWDG.

Residues 1–260 (MEDEQPDSLE…EVATLCKLDI (260 aa)) form a mediates association with membranes region. The mediates interaction with microtubules stretch occupies residues 261 to 630 (LKSLDEDDLG…FVPVGDQTHS (370 aa)). 3 coiled-coil regions span residues 271–298 (PRRVVALEKEAEEWTRRAEEAVVSIQDI), 384–479 (ELEI…CAKR), and 512–542 (SIQMKRDKIKEEEQKKKEWINQERQKTLQRL). Disordered regions lie at residues 506 to 528 (YSRQHHSIQMKRDKIKEEEQKKK), 546 to 571 (KDKRLAQSVRNTSGSEPVAPNLPSDL), 586 to 612 (IHPSSRKTRGVPLSEAGNVKSPKCQNC), and 627 to 707 (QTHS…FSCP). Residues 515–528 (MKRDKIKEEEQKKK) show a composition bias toward basic and acidic residues. Serine 606 bears the Phosphoserine mark. The mediates actin nucleation stretch occupies residues 631-809 (KSSEELSLPP…DEQDPGQWDG (179 aa)). The segment covering 638-659 (LPPPPPPPPPPPPPPPPPPPPL) has biased composition (pro residues). Polar residues predominate over residues 662 to 673 (LSSSSQAATHQN). WH2 domains are found at residues 709 to 727 (SMDEVLASLRHGRAPLRKV) and 739 to 756 (INEHILAAIRQGVKLKKV). Positions 754–809 (KKVHPDLGPNPSSKPTSNRRTSDLERSIKAALQRIKRVSADSEEDSDEQDPGQWDG) are disordered. Polar residues predominate over residues 763-772 (NPSSKPTSNR). Residues 770 to 797 (SNRRTSDLERSIKAALQRIKRVSADSEE) adopt a coiled-coil conformation. Positions 794–803 (DSEEDSDEQD) are enriched in acidic residues. At serine 795 the chain carries Phosphoserine.

Interacts with ACTR3; indicative for an association with the ARP2/3 complex. Associates with microtubules; in vitro binds to tubulin heterodimer in a 1:1 stoichiometry; decorates microtubules with a repeat of 80 A along protofilaments. Interacts with RHOD (in GTP-bound form). As to expression, expressed in brain, lung, heart, colon and kidney (at protein level).

The protein localises to the cytoplasm. The protein resides in the endoplasmic reticulum-Golgi intermediate compartment. It localises to the cytoplasmic vesicle membrane. It is found in the golgi apparatus. Its subcellular location is the cis-Golgi network. Functionally, acts as a nucleation-promoting factor (NPF) that stimulates Arp2/3-mediated actin polymerization both at the Golgi apparatus and along tubular membranes. Its activity in membrane tubulation requires F-actin and interaction with microtubules. Proposed to use coordinated actin-nucleating and microtubule-binding activities of distinct WHAMM molecules to drive membrane tubule elongation; when MT-bound can recruit and remodel membrane vesicles but is prevented to activate the Arp2/3 complex. Involved as a regulator of Golgi positioning and morphology. Participates in vesicle transport between the reticulum endoplasmic and the Golgi complex. Required for RhoD-dependent actin reorganization such as in cell adhesion and cell migration. This is WASP homolog-associated protein with actin, membranes and microtubules (WHAMM) from Homo sapiens (Human).